The chain runs to 290 residues: tRNA dimethylallyltransferase (290 aa).

11–18 contributes to the ATP binding site; sequence GPTASGKS. 13–18 is a substrate binding site; it reads TASGKS. 2 interaction with substrate tRNA regions span residues 36-39 and 158-162; these read DSMQ and QRIVR.

Belongs to the IPP transferase family. In terms of assembly, monomer. The cofactor is Mg(2+).

It carries out the reaction adenosine(37) in tRNA + dimethylallyl diphosphate = N(6)-dimethylallyladenosine(37) in tRNA + diphosphate. In terms of biological role, catalyzes the transfer of a dimethylallyl group onto the adenine at position 37 in tRNAs that read codons beginning with uridine, leading to the formation of N6-(dimethylallyl)adenosine (i(6)A). The sequence is that of tRNA dimethylallyltransferase from Bartonella tribocorum (strain CIP 105476 / IBS 506).